A 222-amino-acid chain; its full sequence is Transmembrane reductase CYB561D2 (222 aa).

Residues 2–17 are Cytoplasmic-facing; that stretch reads ALSVETESHIYRALRT. A Cytochrome b561 domain is found at 14-217; it reads ALRTASGAAA…NQVSNAYLYR (204 aa). A helical membrane pass occupies residues 18 to 38; that stretch reads ASGAAAHLVALGFTIFVAVLA. Residues 39–46 lie on the Lumenal side of the membrane; it reads RPGSSLFS. The helical transmembrane segment at 47-67 threads the bilayer; that stretch reads WHPVLMSLAFSFLMTEALLMF. Histidine 48 contributes to the heme b binding site. At 68–85 the chain is on the cytoplasmic side; that stretch reads SPESSLLRSLSRKVRARC. 2 residues coordinate heme b: histidine 86 and histidine 120. Residues 86-106 traverse the membrane as a helical segment; that stretch reads HWVLQLLALLCALLGLGLVIL. The Lumenal segment spans residues 107–122; that stretch reads HKEQLGKAHLTTRHGQ. Residues 123–143 form a helical membrane-spanning segment; that stretch reads AGLLAVLWAGLQCSGGMGLLY. The Cytoplasmic segment spans residues 144–162; it reads PKLLPRWPLAKLKLYHATS. Residue histidine 159 coordinates heme b. A helical membrane pass occupies residues 163–183; it reads GLVGYLLGSASLLLGMFSLWF. At 184-186 the chain is on the lumenal side; sequence TAT. Residues 187 to 207 form a helical membrane-spanning segment; sequence VTGGAWYLAVLCPILTSLVIM. The Cytoplasmic portion of the chain corresponds to 208–222; that stretch reads NQVSNAYLYRKRIQP.

The cofactor is heme b. Highly expressed in the brain, lung, liver, and kidney. Moderately expressed in the heart, placenta, skeletal muscle, and pancreas.

The protein localises to the endoplasmic reticulum membrane. Its subcellular location is the cytoplasmic vesicle membrane. It carries out the reaction monodehydro-L-ascorbate radical(out) + L-ascorbate(in) = monodehydro-L-ascorbate radical(in) + L-ascorbate(out). It catalyses the reaction Fe(3+)(out) + L-ascorbate(in) = monodehydro-L-ascorbate radical(in) + Fe(2+)(out) + H(+). Functionally, transmembrane reductase that may use ascorbate as an electron donor in the cytoplasm and transfer electrons across endoplasmic reticulum membranes to reduce monodehydro-L-ascorbate radical and iron cations Fe(3+) in the lumen of that compartment. In Mus musculus (Mouse), this protein is Transmembrane reductase CYB561D2.